The sequence spans 234 residues: Phosphoglycolate phosphatase (234 aa).

Aspartate 9 acts as the Nucleophile in catalysis. Aspartate 9 and aspartate 11 together coordinate Mg(2+). Lysine 162 contributes to the substrate binding site. Mg(2+)-binding residues include aspartate 185 and aspartate 189.

This sequence belongs to the archaeal SPP-like hydrolase family. The cofactor is Mg(2+).

It catalyses the reaction 2-phosphoglycolate + H2O = glycolate + phosphate. Its function is as follows. Catalyzes the dephosphorylation of 2-phosphoglycolate. This chain is Phosphoglycolate phosphatase, found in Methanobrevibacter smithii (strain ATCC 35061 / DSM 861 / OCM 144 / PS).